Consider the following 362-residue polypeptide: MSPTATVQLTDDTAKRFEGHAKLLAIGTATPTNWVDQATYPDFYFRITNSEHLLEHKEKFRRICNKSKIRKRHLVLTKELLKKNPNLCTYNDASLNTRQDILVSEVPKLGKEAAMKAIKEWGRPISEITHLVFCTTSGVDMPGADFQLTKLLGLNSSVKRLMMYQQGCNAGAAMLRLVKDLAENNKGARVLVVCSEITINIFRGPSLEQDDNLLAQCLFGDGSAAMIVGKDPRPGLETPLFELVSSAQTIVPNTDSHLKLHLREMGLTFHCSRAVPSVLAENVEDCLVKAFEPYGISDWNSIFWVFHPGGNAIVDRVEERLGLGPERLRASRDVLSEYGNLTSACVLFILDEMRKKSKKDEQ.

C168 is a catalytic residue.

This sequence belongs to the thiolase-like superfamily. Chalcone/stilbene synthases family.

The enzyme catalyses (E)-4-coumaroyl-CoA + 3 malonyl-CoA + 3 H(+) = 2',4,4',6'-tetrahydroxychalcone + 3 CO2 + 4 CoA. The protein operates within secondary metabolite biosynthesis; flavonoid biosynthesis. Its function is as follows. The primary product of this enzyme is 4,2',4',6'-tetrahydroxychalcone (also termed naringenin-chalcone or chalcone) which can under specific conditions spontaneously isomerize into naringenin. In Ipomoea trifida (Morning glory), this protein is Chalcone synthase A (CHSA).